Reading from the N-terminus, the 220-residue chain is Putative GED domain-containing protein DNM1P46 (220 aa).

The segment at 18–46 (VSVETRNVKPQGKDSKAEENGSHSFMHSM) is disordered. Positions 28–38 (QGKDSKAEENG) are enriched in basic and acidic residues. In terms of domain architecture, GED spans 54–149 (METTQNLVDS…CCPTCTRLGT (96 aa)). Residues 173 to 194 (DTPGGVGRAGTAARRDSRGNEK) are disordered. Residues 185–194 (ARRDSRGNEK) show a composition bias toward basic and acidic residues.

The polypeptide is Putative GED domain-containing protein DNM1P46 (DNM1P46) (Homo sapiens (Human)).